We begin with the raw amino-acid sequence, 466 residues long: Putative chitinase 2 (466 aa).

Positions Met-1 to Gly-17 are cleaved as a signal peptide. The 361-residue stretch at Phe-20 to Tyr-380 folds into the GH18 domain. A disulfide bridge links Cys-24 with Cys-49. Residue Glu-141 is the Proton donor of the active site. A coiled-coil region spans residues Tyr-395–Gln-447.

Belongs to the glycosyl hydrolase 18 family. In terms of tissue distribution, prismatic layer of shell (at protein level). Expressed primarily in the mantle with highest level in the mantle edge and lower level in the mantle pallium.

The protein localises to the secreted. It carries out the reaction Random endo-hydrolysis of N-acetyl-beta-D-glucosaminide (1-&gt;4)-beta-linkages in chitin and chitodextrins.. This chain is Putative chitinase 2, found in Margaritifera margaritifera (Freshwater pearl mussel).